The following is a 170-amino-acid chain: Urease accessory protein UreE (170 aa).

This sequence belongs to the UreE family.

It is found in the cytoplasm. Its function is as follows. Involved in urease metallocenter assembly. Binds nickel. Probably functions as a nickel donor during metallocenter assembly. The protein is Urease accessory protein UreE of Helicobacter pylori (strain ATCC 700392 / 26695) (Campylobacter pylori).